A 109-amino-acid chain; its full sequence is Small ribosomal subunit protein bS6c (109 aa).

This sequence belongs to the bacterial ribosomal protein bS6 family.

Its subcellular location is the plastid. It localises to the chloroplast. Functionally, binds together with bS18 to 16S ribosomal RNA. In Pyropia yezoensis (Susabi-nori), this protein is Small ribosomal subunit protein bS6c.